A 314-amino-acid polypeptide reads, in one-letter code: MNVVKISPRGYCYGVVDAMVLARQAAQNLDLPRPIYILGMIVHNKHVTDAFEEEGIISLDGPNRLDILKQVDKGTVIFTAHGVSPQVRKLAKEKGLTVVDATCPDVTRTHDLIREKSQEGYKFIYVGKKGHPEPEGAIGVAPEFVHLVENVEDVESLDISADKIIITNQTTMSQWDVSEIMKKAMEKYPQAEVHNEICLATQVRQEAVAEQARECDLVIVVGDPKSNNSNRLAQVSEQIAGTKAYRIGDVTELQQEWFDGVETVGVTAGASTPTPITKEVIAFIEKYDPSKPETWTPERKVTLQKILPKVKIKK.

Cys-12 lines the [4Fe-4S] cluster pocket. (2E)-4-hydroxy-3-methylbut-2-enyl diphosphate contacts are provided by His-43 and His-81. Dimethylallyl diphosphate contacts are provided by His-43 and His-81. Residues His-43 and His-81 each contribute to the isopentenyl diphosphate site. Residue Cys-103 participates in [4Fe-4S] cluster binding. His-131 lines the (2E)-4-hydroxy-3-methylbut-2-enyl diphosphate pocket. His-131 contributes to the dimethylallyl diphosphate binding site. His-131 is an isopentenyl diphosphate binding site. The active-site Proton donor is the Glu-133. Thr-170 provides a ligand contact to (2E)-4-hydroxy-3-methylbut-2-enyl diphosphate. Residue Cys-198 coordinates [4Fe-4S] cluster. Residues Ser-226, Asn-228, and Ser-271 each coordinate (2E)-4-hydroxy-3-methylbut-2-enyl diphosphate. Positions 226, 228, and 271 each coordinate dimethylallyl diphosphate. Isopentenyl diphosphate-binding residues include Ser-226, Asn-228, and Ser-271.

The protein belongs to the IspH family. The cofactor is [4Fe-4S] cluster.

The catalysed reaction is isopentenyl diphosphate + 2 oxidized [2Fe-2S]-[ferredoxin] + H2O = (2E)-4-hydroxy-3-methylbut-2-enyl diphosphate + 2 reduced [2Fe-2S]-[ferredoxin] + 2 H(+). It catalyses the reaction dimethylallyl diphosphate + 2 oxidized [2Fe-2S]-[ferredoxin] + H2O = (2E)-4-hydroxy-3-methylbut-2-enyl diphosphate + 2 reduced [2Fe-2S]-[ferredoxin] + 2 H(+). It participates in isoprenoid biosynthesis; dimethylallyl diphosphate biosynthesis; dimethylallyl diphosphate from (2E)-4-hydroxy-3-methylbutenyl diphosphate: step 1/1. The protein operates within isoprenoid biosynthesis; isopentenyl diphosphate biosynthesis via DXP pathway; isopentenyl diphosphate from 1-deoxy-D-xylulose 5-phosphate: step 6/6. Its function is as follows. Catalyzes the conversion of 1-hydroxy-2-methyl-2-(E)-butenyl 4-diphosphate (HMBPP) into a mixture of isopentenyl diphosphate (IPP) and dimethylallyl diphosphate (DMAPP). Acts in the terminal step of the DOXP/MEP pathway for isoprenoid precursor biosynthesis. The sequence is that of 4-hydroxy-3-methylbut-2-enyl diphosphate reductase from Halalkalibacterium halodurans (strain ATCC BAA-125 / DSM 18197 / FERM 7344 / JCM 9153 / C-125) (Bacillus halodurans).